The chain runs to 490 residues: Betaine aldehyde dehydrogenase (490 aa).

K(+) is bound by residues T26, I27, and D93. 150–152 (GAW) serves as a coordination point for NAD(+). K162 functions as the Charge relay system in the catalytic mechanism. 176–179 (KPSE) is a binding site for NAD(+). Residue V180 participates in K(+) binding. 230–233 (GVAS) lines the NAD(+) pocket. Residue L246 participates in K(+) binding. Catalysis depends on E252, which acts as the Proton acceptor. NAD(+)-binding residues include G254, C286, and E387. The active-site Nucleophile is C286. C286 is modified (cysteine sulfenic acid (-SOH)). Positions 457 and 460 each coordinate K(+). Catalysis depends on E464, which acts as the Charge relay system.

It belongs to the aldehyde dehydrogenase family. In terms of assembly, dimer of dimers. Requires K(+) as cofactor.

It carries out the reaction betaine aldehyde + NAD(+) + H2O = glycine betaine + NADH + 2 H(+). Its pathway is amine and polyamine biosynthesis; betaine biosynthesis via choline pathway; betaine from betaine aldehyde: step 1/1. Involved in the biosynthesis of the osmoprotectant glycine betaine. Catalyzes the irreversible oxidation of betaine aldehyde to the corresponding acid. The protein is Betaine aldehyde dehydrogenase of Escherichia coli O9:H4 (strain HS).